A 336-amino-acid chain; its full sequence is Fructose-1,6-bisphosphatase class 1 (336 aa).

4 residues coordinate Mg(2+): E90, D112, L114, and D115. Residues 115 to 118 (DGSS), N211, and K277 each bind substrate. E283 provides a ligand contact to Mg(2+).

This sequence belongs to the FBPase class 1 family. As to quaternary structure, homotetramer. The cofactor is Mg(2+).

Its subcellular location is the cytoplasm. The enzyme catalyses beta-D-fructose 1,6-bisphosphate + H2O = beta-D-fructose 6-phosphate + phosphate. Its pathway is carbohydrate biosynthesis; gluconeogenesis. The protein is Fructose-1,6-bisphosphatase class 1 of Pseudomonas paraeruginosa (strain DSM 24068 / PA7) (Pseudomonas aeruginosa (strain PA7)).